Reading from the N-terminus, the 308-residue chain is MSTTLLQSDLPGLPLRHRGKVRDVFDLPRDRLPADAPPGDYLLMVATDRLSAFDVVLPDPIPGKGEMLCQVSNFWFHKTEHLMPNHLMDIRVEQVLPEGVDPALYAKRAVVTRKLKPVPVEAIARGYVIGSGWKDYQRTGKISGIELPDGLRQAEKLPEPIFTPSTKAAVGDHDENIDFDAMVKTVGAELAERVRDATLRIYRFAADFAAERGILLADTKFEFGTDADGRLYIMDEMLTPDSSRYWPADQYEPGTSPPSYDKQFVRDYLETLDWGKTAPGPRLPADVIDRTRAKYAEALQRLADISVD.

It belongs to the SAICAR synthetase family.

The enzyme catalyses 5-amino-1-(5-phospho-D-ribosyl)imidazole-4-carboxylate + L-aspartate + ATP = (2S)-2-[5-amino-1-(5-phospho-beta-D-ribosyl)imidazole-4-carboxamido]succinate + ADP + phosphate + 2 H(+). It participates in purine metabolism; IMP biosynthesis via de novo pathway; 5-amino-1-(5-phospho-D-ribosyl)imidazole-4-carboxamide from 5-amino-1-(5-phospho-D-ribosyl)imidazole-4-carboxylate: step 1/2. This is Phosphoribosylaminoimidazole-succinocarboxamide synthase from Xanthomonas euvesicatoria pv. vesicatoria (strain 85-10) (Xanthomonas campestris pv. vesicatoria).